The primary structure comprises 321 residues: Putrescine export system permease protein SapB (321 aa).

Residues 1-8 (MIIFTLRR) are Cytoplasmic-facing. Residues 9 to 29 (ILLLIVTLFLLTFVGFSLSYF) traverse the membrane as a helical segment. Topologically, residues 30 to 80 (TPHAPLQGASLWNAWVFWFNGLIHWDFGVSSINGQPIAEQLKEVFPATMEL) are periplasmic. An ABC transmembrane type-1 domain is found at 74-302 (FPATMELCIL…SLVIIVNVIS (229 aa)). Residues 81 to 101 (CILAFGFALIVGIPVGMIAGI) form a helical membrane-spanning segment. Topologically, residues 102 to 112 (TRHKWQDNLIN) are cytoplasmic. The helical transmembrane segment at 113–133 (AIALLGFSIPVFWLALLLTLF) threads the bilayer. Over 134 to 174 (CSLTLGWLPVSGRFDLLYEVKPITGFALIDAWLSDSPWRDE) the chain is Periplasmic. The helical transmembrane segment at 175–195 (MIMSAIRHMILPVITLSVAPT) threads the bilayer. Over 196 to 248 (TEVIRLMRISTIEVYDQNYVKAAATRGLSRFTILRRHVLHNALPPVIPRLGLQ) the chain is Cytoplasmic. A helical transmembrane segment spans residues 249–269 (FSTMLTLAMITEMVFSWPGLG). The Periplasmic portion of the chain corresponds to 270–280 (RWLINAIRQQD). The helical transmembrane segment at 281-301 (YAAISAGVMVCGSLVIIVNVI) threads the bilayer. The Cytoplasmic portion of the chain corresponds to 302 to 321 (SDILGAMANPLKHKEWYALR).

It belongs to the binding-protein-dependent transport system permease family. OppBC subfamily.

It localises to the cell inner membrane. Part of a putrescine export transport system, does not play a role in resistance to antimicrobial peptides. This Escherichia coli (strain K12) protein is Putrescine export system permease protein SapB (sapB).